Reading from the N-terminus, the 219-residue chain is Cytidylate kinase (219 aa).

15–23 (GPAASGKGT) is an ATP binding site.

This sequence belongs to the cytidylate kinase family. Type 1 subfamily.

It localises to the cytoplasm. The catalysed reaction is CMP + ATP = CDP + ADP. The enzyme catalyses dCMP + ATP = dCDP + ADP. The chain is Cytidylate kinase from Brucella melitensis biotype 2 (strain ATCC 23457).